The sequence spans 323 residues: L-lactate dehydrogenase (323 aa).

Residues Val-18, Asp-39, Arg-44, Tyr-69, and Gly-83–Ala-84 each bind NAD(+). 2 residues coordinate substrate: Gln-86 and Arg-92. NAD(+) contacts are provided by residues Thr-105, Ala-122–Asn-124, and Ser-147. Residue Asn-124 to Asp-127 participates in substrate binding. Substrate is bound at residue Asp-152–Arg-155. His-179 acts as the Proton acceptor in catalysis. Phosphotyrosine is present on Tyr-223. Residue Thr-232 participates in substrate binding.

It belongs to the LDH/MDH superfamily. LDH family. In terms of assembly, homotetramer.

Its subcellular location is the cytoplasm. The catalysed reaction is (S)-lactate + NAD(+) = pyruvate + NADH + H(+). It functions in the pathway fermentation; pyruvate fermentation to lactate; (S)-lactate from pyruvate: step 1/1. Its function is as follows. Catalyzes the conversion of lactate to pyruvate. In Pediococcus acidilactici, this protein is L-lactate dehydrogenase.